The following is an 872-amino-acid chain: Protein SEY1 (872 aa).

The Cytoplasmic portion of the chain corresponds to 1–749; that stretch reads MVANGHFAGV…KRSAIGGITQ (749 aa). Residues 49-294 enclose the GB1/RHD3-type G domain; it reads GFNYHLISVF…IEGGIFLPEY (246 aa). 59-66 is a GTP binding site; the sequence is GSQSTGKS. Positions 482–504 form a coiled coil; sequence SNYQQELSLYQKDLENIGGQLRR. A disordered region spans residues 676 to 704; sequence LDKWIGHTPSSATPADEEDLTPIGGVDED. Residues 690 to 704 show a composition bias toward acidic residues; sequence ADEEDLTPIGGVDED. A helical transmembrane segment spans residues 750–770; that stretch reads VPLYFYGLLLALGWNEIVAVL. Over 771–773 the chain is Lumenal; the sequence is RNP. Residues 774–794 traverse the membrane as a helical segment; sequence AYFLLLFVCAVTAYVTYQLNL. Over 795-872 the chain is Cytoplasmic; sequence WGPIIKMTEA…IDDADDDDDF (78 aa). Residues 849 to 872 are disordered; that stretch reads NRKSAGGFQNNRSHIDDADDDDDF.

Belongs to the TRAFAC class dynamin-like GTPase superfamily. GB1/RHD3 GTPase family. RHD3 subfamily.

Its subcellular location is the endoplasmic reticulum membrane. Cooperates with the reticulon proteins and tubule-shaping DP1 family proteins to generate and maintain the structure of the tubular endoplasmic reticulum network. Has GTPase activity, which is required for its function in ER organization. In Paracoccidioides brasiliensis (strain Pb03), this protein is Protein SEY1.